A 432-amino-acid chain; its full sequence is Phosphomethylpyrimidine synthase (432 aa).

Residues Asn66, Met95, Tyr124, His163, 185-187 (SRG), 226-229 (DGLR), and Glu265 each bind substrate. His269 lines the Zn(2+) pocket. Tyr292 contacts substrate. Residue His333 coordinates Zn(2+). Residues Cys409, Cys412, and Cys416 each coordinate [4Fe-4S] cluster.

This sequence belongs to the ThiC family. The cofactor is [4Fe-4S] cluster.

It catalyses the reaction 5-amino-1-(5-phospho-beta-D-ribosyl)imidazole + S-adenosyl-L-methionine = 4-amino-2-methyl-5-(phosphooxymethyl)pyrimidine + CO + 5'-deoxyadenosine + formate + L-methionine + 3 H(+). The protein operates within cofactor biosynthesis; thiamine diphosphate biosynthesis. In terms of biological role, catalyzes the synthesis of the hydroxymethylpyrimidine phosphate (HMP-P) moiety of thiamine from aminoimidazole ribotide (AIR) in a radical S-adenosyl-L-methionine (SAM)-dependent reaction. In Thermoanaerobacter sp. (strain X514), this protein is Phosphomethylpyrimidine synthase.